We begin with the raw amino-acid sequence, 1521 residues long: Suppressor of Ty 6 homolog (1521 aa).

Residues 1 to 238 form a disordered region; that stretch reads MDFIDNQAEE…EEIIEDDGEG (238 aa). The span at 26-41 shows a compositional bias: basic residues; that stretch reads KKMKMAKEKSKRKKKM. The Nuclear localization signal signature appears at 26–42; the sequence is KKMKMAKEKSKRKKKMV. Acidic residues-rich tracts occupy residues 45–56 and 67–76; these read SDEDEDDDDDEE and ADDDDEEEDA. Residues 77 to 89 are compositionally biased toward basic and acidic residues; sequence KSEKSEKSRHSGE. Over residues 90-99 the composition is skewed to acidic residues; the sequence is DELDDEDLDL. Residues 126-157 show a composition bias toward basic and acidic residues; sequence PIRRPNHEDDDLLSERGSDDGDRRKDRGRGDR. Acidic residues-rich tracts occupy residues 166 to 176, 191 to 200, and 209 to 238; these read RSEDDFIEDDG, NLPEGAEDDA, and FNLD…DGEG. An S1 motif domain is found at 1183-1252; sequence LGDSRQGGCP…ERFSLFLSCK (70 aa). The SH2 domain occupies 1300–1389; sequence HPNFHNVSYE…IARFVQPMIQ (90 aa).

This sequence belongs to the SPT6 family. As to quaternary structure, interacts with glp-1 and lin-12. Abundant in embryos, and less abundant in larvae.

The protein resides in the nucleus. Histone H3-H4 chaperone that plays a role in maintenance of chromatin structure during RNA polymerase II transcription elongation. Required for several aspects of morphogenesis of C.elegans, including regulation of division in the germline and gut and specification of ventral-uterine precursor cell fate. This is Suppressor of Ty 6 homolog (emb-5) from Caenorhabditis elegans.